The following is a 412-amino-acid chain: Imidazolonepropionase (412 aa).

Residues histidine 76 and histidine 78 each coordinate Fe(3+). The Zn(2+) site is built by histidine 76 and histidine 78. 4-imidazolone-5-propanoate-binding residues include arginine 85, tyrosine 148, and histidine 181. Tyrosine 148 contacts N-formimidoyl-L-glutamate. Histidine 242 is a Fe(3+) binding site. Histidine 242 is a binding site for Zn(2+). Glutamate 245 lines the 4-imidazolone-5-propanoate pocket. Aspartate 317 is a binding site for Fe(3+). Aspartate 317 is a binding site for Zn(2+). Positions 319 and 321 each coordinate N-formimidoyl-L-glutamate. Position 322 (serine 322) interacts with 4-imidazolone-5-propanoate.

The protein belongs to the metallo-dependent hydrolases superfamily. HutI family. Zn(2+) is required as a cofactor. Fe(3+) serves as cofactor.

It localises to the cytoplasm. The catalysed reaction is 4-imidazolone-5-propanoate + H2O = N-formimidoyl-L-glutamate. It functions in the pathway amino-acid degradation; L-histidine degradation into L-glutamate; N-formimidoyl-L-glutamate from L-histidine: step 3/3. Its function is as follows. Catalyzes the hydrolytic cleavage of the carbon-nitrogen bond in imidazolone-5-propanoate to yield N-formimidoyl-L-glutamate. It is the third step in the universal histidine degradation pathway. The protein is Imidazolonepropionase of Staphylococcus aureus (strain bovine RF122 / ET3-1).